We begin with the raw amino-acid sequence, 368 residues long: Peptide chain release factor 2 (368 aa).

An N5-methylglutamine modification is found at Gln-245.

It belongs to the prokaryotic/mitochondrial release factor family. In terms of processing, methylated by PrmC. Methylation increases the termination efficiency of RF2.

The protein resides in the cytoplasm. Peptide chain release factor 2 directs the termination of translation in response to the peptide chain termination codons UGA and UAA. This is Peptide chain release factor 2 (prfB) from Treponema pallidum (strain Nichols).